We begin with the raw amino-acid sequence, 130 residues long: Small ribosomal subunit protein uS11 (130 aa).

It belongs to the universal ribosomal protein uS11 family. In terms of assembly, part of the 30S ribosomal subunit. Interacts with proteins S7 and S18. Binds to IF-3.

Functionally, located on the platform of the 30S subunit, it bridges several disparate RNA helices of the 16S rRNA. Forms part of the Shine-Dalgarno cleft in the 70S ribosome. In Microcystis aeruginosa (strain NIES-843 / IAM M-2473), this protein is Small ribosomal subunit protein uS11.